Reading from the N-terminus, the 309-residue chain is Sulfate adenylyltransferase subunit 2 (309 aa).

The protein belongs to the PAPS reductase family. CysD subfamily. Heterodimer composed of CysD, the smaller subunit, and CysN.

It carries out the reaction sulfate + ATP + H(+) = adenosine 5'-phosphosulfate + diphosphate. Its pathway is sulfur metabolism; hydrogen sulfide biosynthesis; sulfite from sulfate: step 1/3. Its function is as follows. With CysN forms the ATP sulfurylase (ATPS) that catalyzes the adenylation of sulfate producing adenosine 5'-phosphosulfate (APS) and diphosphate, the first enzymatic step in sulfur assimilation pathway. APS synthesis involves the formation of a high-energy phosphoric-sulfuric acid anhydride bond driven by GTP hydrolysis by CysN coupled to ATP hydrolysis by CysD. This is Sulfate adenylyltransferase subunit 2 from Methylorubrum extorquens (strain CM4 / NCIMB 13688) (Methylobacterium extorquens).